A 558-amino-acid polypeptide reads, in one-letter code: uncharacterized protein (558 aa).

Residues asparagine 531–arginine 558 form a disordered region.

This is an uncharacterized protein from Saccharomyces cerevisiae (strain ATCC 204508 / S288c) (Baker's yeast).